Here is a 69-residue protein sequence, read N- to C-terminus: Antimicrobial peptide Eval36 (69 aa).

Residues methionine 1–serine 23 form the signal peptide. Residue leucine 37 is modified to Leucine amide. Positions glycine 38–arginine 69 are excised as a propeptide.

It belongs to the non-disulfide-bridged peptide (NDBP) superfamily. Short antimicrobial peptide (group 4) family. Expressed by the venom gland.

The protein resides in the secreted. Probable antimicrobial peptide. Shows low inhibitory activity against herpes simplex virus type 1 (HSV-1). The chain is Antimicrobial peptide Eval36 from Euscorpiops validus (Scorpion).